The primary structure comprises 206 residues: Endoplasmic reticulum transmembrane protein YET-like (206 aa).

Residues 1 to 2 (ME) are Lumenal-facing. The helical transmembrane segment at 3–23 (FLMTLVFLVLLVEIVFCTFFM) threads the bilayer. The Cytoplasmic portion of the chain corresponds to 24–46 (LPVSMHLRKNVYNKLDKLFGGQN). A helical membrane pass occupies residues 47 to 67 (AKIFLKVLALLVIIVFCDSIV). Topologically, residues 68 to 101 (NSYNINKKLHTPELTGAKFDRQNEYTRMFRYQRN) are lumenal. A helical membrane pass occupies residues 102–122 (SYICGFCLYLFFLIYRSQGII). The Cytoplasmic segment spans residues 123–206 (SQLSNVEASK…KKPKTQKKDD (84 aa)). A coiled-coil region spans residues 140–198 (KNNLNTVETLLSENEKLKTEIKDLKKMEKEHKAMKSQAENTTKEYLKLQEEYNQLLGKK). The short motif at 203-206 (KKDD) is the Di-lysine motif element.

The protein belongs to the BCAP29/BCAP31 family.

Its subcellular location is the endoplasmic reticulum membrane. May play a role in anterograde transport of membrane proteins from the endoplasmic reticulum to the Golgi. This is Endoplasmic reticulum transmembrane protein YET-like from Dictyostelium discoideum (Social amoeba).